The following is a 67-amino-acid chain: DNA-directed RNA polymerase subunit omega (67 aa).

Belongs to the RNA polymerase subunit omega family. As to quaternary structure, the RNAP catalytic core consists of 2 alpha, 1 beta, 1 beta' and 1 omega subunit. When a sigma factor is associated with the core the holoenzyme is formed, which can initiate transcription.

The enzyme catalyses RNA(n) + a ribonucleoside 5'-triphosphate = RNA(n+1) + diphosphate. Functionally, promotes RNA polymerase assembly. Latches the N- and C-terminal regions of the beta' subunit thereby facilitating its interaction with the beta and alpha subunits. This Bacillus velezensis (strain DSM 23117 / BGSC 10A6 / LMG 26770 / FZB42) (Bacillus amyloliquefaciens subsp. plantarum) protein is DNA-directed RNA polymerase subunit omega.